Consider the following 175-residue polypeptide: CDP-archaeol synthase (175 aa).

The next 4 helical transmembrane spans lie at 41–61, 78–98, 122–142, and 150–170; these read GLFS…WLSM, YASA…GDMF, FVVG…VSNF, and VLIM…FIGV.

This sequence belongs to the CDP-archaeol synthase family. It depends on Mg(2+) as a cofactor.

The protein localises to the cell membrane. It carries out the reaction 2,3-bis-O-(geranylgeranyl)-sn-glycerol 1-phosphate + CTP + H(+) = CDP-2,3-bis-O-(geranylgeranyl)-sn-glycerol + diphosphate. It participates in membrane lipid metabolism; glycerophospholipid metabolism. Functionally, catalyzes the formation of CDP-2,3-bis-(O-geranylgeranyl)-sn-glycerol (CDP-archaeol) from 2,3-bis-(O-geranylgeranyl)-sn-glycerol 1-phosphate (DGGGP) and CTP. This reaction is the third ether-bond-formation step in the biosynthesis of archaeal membrane lipids. The sequence is that of CDP-archaeol synthase from Methanosarcina acetivorans (strain ATCC 35395 / DSM 2834 / JCM 12185 / C2A).